Here is a 414-residue protein sequence, read N- to C-terminus: Serpin A3-6 (414 aa).

Residues 1–25 (MRTERVSPLLALGILVAGLCSRVHC) form the signal peptide. N-linked (GlcNAc...) asparagine glycans are attached at residues asparagine 103, asparagine 183, asparagine 233, asparagine 267, and asparagine 321.

Belongs to the serpin family. In terms of assembly, homodimer.

It localises to the cytoplasmic vesicle. Its subcellular location is the secretory vesicle. The protein localises to the chromaffin granule. It is found in the secreted. Its function is as follows. Serine protease inhibitor. This is Serpin A3-6 from Bos taurus (Bovine).